Here is a 386-residue protein sequence, read N- to C-terminus: Succinate--CoA ligase [ADP-forming] subunit beta (386 aa).

Positions 9–244 constitute an ATP-grasp domain; the sequence is KEVLRKYGVV…LDEEDADEIE (236 aa). Residues Lys-46, 53-55, Glu-99, Ala-102, and Glu-107 contribute to the ATP site; that span reads GRG. Residues Asn-199 and Asp-213 each contribute to the Mg(2+) site. Substrate is bound by residues Asn-264 and 321 to 323; that span reads GIM.

This sequence belongs to the succinate/malate CoA ligase beta subunit family. As to quaternary structure, heterotetramer of two alpha and two beta subunits. It depends on Mg(2+) as a cofactor.

It catalyses the reaction succinate + ATP + CoA = succinyl-CoA + ADP + phosphate. It carries out the reaction GTP + succinate + CoA = succinyl-CoA + GDP + phosphate. The protein operates within carbohydrate metabolism; tricarboxylic acid cycle; succinate from succinyl-CoA (ligase route): step 1/1. Its function is as follows. Succinyl-CoA synthetase functions in the citric acid cycle (TCA), coupling the hydrolysis of succinyl-CoA to the synthesis of either ATP or GTP and thus represents the only step of substrate-level phosphorylation in the TCA. The beta subunit provides nucleotide specificity of the enzyme and binds the substrate succinate, while the binding sites for coenzyme A and phosphate are found in the alpha subunit. This chain is Succinate--CoA ligase [ADP-forming] subunit beta, found in Azoarcus sp. (strain BH72).